An 815-amino-acid polypeptide reads, in one-letter code: Probable receptor-like protein kinase At2g39360 (815 aa).

A signal peptide spans M1–S26. The Extracellular segment spans residues V27–S407. N40, N45, N125, N146, N209, N244, N277, N331, N355, N401, and N405 each carry an N-linked (GlcNAc...) asparagine glycan. The chain crosses the membrane as a helical span at residues V408–V428. Topologically, residues S429–R815 are cytoplasmic. In terms of domain architecture, Protein kinase spans F487–M761. ATP-binding positions include I493–V501 and K515. D612 acts as the Proton acceptor in catalysis.

Belongs to the protein kinase superfamily. Ser/Thr protein kinase family.

It localises to the cell membrane. The chain is Probable receptor-like protein kinase At2g39360 from Arabidopsis thaliana (Mouse-ear cress).